The primary structure comprises 426 residues: Glutamyl-tRNA reductase (426 aa).

Substrate-binding positions include 49–52 (TCNR), S109, 114–116 (EGQ), and Q120. Catalysis depends on C50, which acts as the Nucleophile. NADP(+) is bound at residue 189 to 194 (GAGETG).

Belongs to the glutamyl-tRNA reductase family. Homodimer.

The enzyme catalyses (S)-4-amino-5-oxopentanoate + tRNA(Glu) + NADP(+) = L-glutamyl-tRNA(Glu) + NADPH + H(+). It participates in porphyrin-containing compound metabolism; protoporphyrin-IX biosynthesis; 5-aminolevulinate from L-glutamyl-tRNA(Glu): step 1/2. It functions in the pathway porphyrin-containing compound metabolism; chlorophyll biosynthesis. Its function is as follows. Catalyzes the NADPH-dependent reduction of glutamyl-tRNA(Glu) to glutamate 1-semialdehyde (GSA). The polypeptide is Glutamyl-tRNA reductase (Chlorobium chlorochromatii (strain CaD3)).